The primary structure comprises 787 residues: Signal transducer and activator of transcription 5B (787 aa).

At Y90 the chain carries Phosphotyrosine. S128 is modified (phosphoserine). An SH2 domain is found at 589-686 (WNDGAILGFV…EVYSKYYTPV (98 aa)). Position 682 is a phosphotyrosine (Y682). Position 699 is a phosphotyrosine; by HCK, JAK and PTK6 (Y699).

This sequence belongs to the transcription factor STAT family. As to quaternary structure, upon activation, forms a homodimer or a heterodimer with a related family member. Binds NR3C1. Interacts with NCOA1. Interacts with NMI. Interacts with SOCS7. Interacts (via SH2 domain) with INSR. Interacts with CPEB3; this inhibits STAT5B-mediated transcriptional activation. Post-translationally, tyrosine phosphorylated in response to signaling via activated KIT, resulting in translocation to the nucleus. Tyrosine phosphorylated in response to signaling via activated FLT3; wild-type FLT3 results in much weaker phosphorylation than constitutively activated mutant FLT3. Alternatively, can be phosphorylated by JAK2. Phosphorylation at Tyr-699 by PTK6 or HCK leads to an increase of its transcriptional activity.

The protein resides in the cytoplasm. The protein localises to the nucleus. In terms of biological role, carries out a dual function: signal transduction and activation of transcription. Mediates cellular responses to the cytokine KITLG/SCF and other growth factors. Binds to the GAS element and activates PRL-induced transcription. Positively regulates hematopoietic/erythroid differentiation. This chain is Signal transducer and activator of transcription 5B (STAT5B), found in Sus scrofa (Pig).